Consider the following 616-residue polypeptide: ATP-dependent zinc metalloprotease FtsH (616 aa).

The Cytoplasmic segment spans residues Met-1–Ala-8. The helical transmembrane segment at Thr-9–Leu-29 threads the bilayer. Residues Ser-30–Trp-114 lie on the Extracellular side of the membrane. A helical membrane pass occupies residues Trp-115 to Phe-135. Residues Met-136–Val-616 lie on the Cytoplasmic side of the membrane. Residue Gly-208–Thr-215 coordinates ATP. His-430 lines the Zn(2+) pocket. The active site involves Glu-431. 2 residues coordinate Zn(2+): His-434 and Asp-506.

This sequence in the central section; belongs to the AAA ATPase family. In the C-terminal section; belongs to the peptidase M41 family. In terms of assembly, homohexamer. Zn(2+) is required as a cofactor.

Its subcellular location is the cell membrane. Its function is as follows. Acts as a processive, ATP-dependent zinc metallopeptidase for both cytoplasmic and membrane proteins. Plays a role in the quality control of integral membrane proteins. The polypeptide is ATP-dependent zinc metalloprotease FtsH (Caldicellulosiruptor bescii (strain ATCC BAA-1888 / DSM 6725 / KCTC 15123 / Z-1320) (Anaerocellum thermophilum)).